Consider the following 125-residue polypeptide: Ribosome-binding factor A (125 aa).

It belongs to the RbfA family. In terms of assembly, monomer. Binds 30S ribosomal subunits, but not 50S ribosomal subunits or 70S ribosomes.

The protein localises to the cytoplasm. Its function is as follows. One of several proteins that assist in the late maturation steps of the functional core of the 30S ribosomal subunit. Associates with free 30S ribosomal subunits (but not with 30S subunits that are part of 70S ribosomes or polysomes). Required for efficient processing of 16S rRNA. May interact with the 5'-terminal helix region of 16S rRNA. This chain is Ribosome-binding factor A, found in Fervidobacterium nodosum (strain ATCC 35602 / DSM 5306 / Rt17-B1).